Reading from the N-terminus, the 467-residue chain is tRNA-2-methylthio-N(6)-dimethylallyladenosine synthase (467 aa).

Residues 1-20 (MSDDTTQIEPAMAQETSPRA) form a disordered region. An MTTase N-terminal domain is found at 23-143 (RKVFVKTYGC…LPNALARVRG (121 aa)). C32, C68, C106, C184, C188, and C191 together coordinate [4Fe-4S] cluster. A Radical SAM core domain is found at 170–402 (RKRGVSAFLT…QALLSAQQYA (233 aa)). Residues 405–467 (DSMIGRKMDV…TNSLIAQKLA (63 aa)) enclose the TRAM domain.

It belongs to the methylthiotransferase family. MiaB subfamily. In terms of assembly, monomer. [4Fe-4S] cluster serves as cofactor.

It localises to the cytoplasm. The enzyme catalyses N(6)-dimethylallyladenosine(37) in tRNA + (sulfur carrier)-SH + AH2 + 2 S-adenosyl-L-methionine = 2-methylsulfanyl-N(6)-dimethylallyladenosine(37) in tRNA + (sulfur carrier)-H + 5'-deoxyadenosine + L-methionine + A + S-adenosyl-L-homocysteine + 2 H(+). Catalyzes the methylthiolation of N6-(dimethylallyl)adenosine (i(6)A), leading to the formation of 2-methylthio-N6-(dimethylallyl)adenosine (ms(2)i(6)A) at position 37 in tRNAs that read codons beginning with uridine. The sequence is that of tRNA-2-methylthio-N(6)-dimethylallyladenosine synthase from Brucella canis (strain ATCC 23365 / NCTC 10854 / RM-666).